The primary structure comprises 423 residues: Diels-Alderase pyiF (423 aa).

An N-terminal signal peptide occupies residues 1–17 (MLPSFIFVYSLLATATA). Residues asparagine 60, asparagine 92, and asparagine 219 are each glycosylated (N-linked (GlcNAc...) asparagine).

Belongs to the Diels-Alderase family.

It participates in mycotoxin biosynthesis. Functionally, diels-Alderase; part of the gene cluster that mediates the biosynthesis of the mycotoxin pyrichalasin H, a tyrosine-derived cytochalasan that inhibits the growth of rice seedlings, but also inhibits lymphocyte capping and actin polymerization and alters cell morphology. Pyrichalasin H is indicated as the responsible agent for the genus-specific pathogenicity of M.grisea toward crabgrass. The first step in the pathway is catalyzed by the O-methyltransferase pyiA which methylates free tyrosine to generate the precursor O-methyltyrosine. The hybrid PKS-NRPS pyiS, assisted by the enoyl reductase pyiC, are responsible for fusion of the O-methyltyrosine precursor and the polyketide backbone. The polyketide synthase module (PKS) of pyiS is responsible for the synthesis of the polyketide backbone and the downstream nonribosomal peptide synthetase (NRPS) amidates the carboxyl end of the polyketide with the O-methyltyrosine precursor. As the NRPS A-domain demonstrates substrate tolerance, pyiS can also use phenylalanine, tyrosine and even para-chlorophenylalanine as amino acid precursor, which leads to the production of novel cytochalasans, including halogenated cytochalasans. Because pyiS lacks a designated enoylreductase (ER) domain, the required activity is provided the enoyl reductase pyiC. Reduction by the hydrolyase pyiE leads to 1,5-dihydropyrrolone, which is substrate for dehydration and intra-molecular Diels-Alder cyclization by the Diels-Alderase pyiF to yield the required isoindolone-fused macrocycle. The tailoring cytochrome P450 monooxygenases piyD and piyG catalyze the hydroxylation at C-18 and C-7, respectivily, whereas the short-chain dehydrogenase/reductase pyiH reduces the carbonyl at C-21 in preparation for the transfer of an acetyl group by the acetyltransferase pyiB. These 3 reactions whose order is not clear yet, lead to the production of O-methylpyrichalasin J, a deacetylated pyrichalasin H. Finally, pyiB to converts O-methylpyrichalasin J into the final product pyrichalasin H via acetylation of C-21. The protein is Diels-Alderase pyiF of Pyricularia grisea (Crabgrass-specific blast fungus).